A 315-amino-acid polypeptide reads, in one-letter code: T cell receptor beta chain MC.7.G5 (315 aa).

A signal peptide spans 1 to 21 (MTIRLLCYMGFYFLGAGLMEA). The 93-residue stretch at 22 to 114 (DIYQTPRYLV…TSQYLCASSE (93 aa)) folds into the Ig-like V-type domain. The t cell receptor beta variable 25-1 stretch occupies residues 22–114 (DIYQTPRYLV…TSQYLCASSE (93 aa)). Cys-42 and Cys-110 are joined by a disulfide. A CDR1 region spans residues 46 to 50 (MGHDK). The interval 68–73 (SYGVNS) is CDR2. A glycan (N-linked (GlcNAc...) asparagine) is linked at Asn-72. The segment at 110 to 127 (CASSEARGLAEFTDTQYF) is CDR3. The interval 122–136 (TDTQYFGPGTRLTVL) is t cell receptor beta joining 2-3. Residues 138–315 (DLKNVFPPEV…AMVKRKDSRG (178 aa)) form a t cell receptor beta constant 2 region. The Ig-like C1-type domain occupies 145 to 254 (PEVAVFEPSE…WTQDRAKPVT (110 aa)). Cys-167 and Cys-232 are oxidised to a cystine. Asn-206 is a glycosylation site (N-linked (GlcNAc...) asparagine). The interval 267–281 (CGFTSESYQQGVLSA) is connecting peptide. Residues 282–304 (TILYEILLGKATLYAVLVSALVL) form a helical membrane-spanning segment. At 305 to 315 (MAMVKRKDSRG) the chain is on the cytoplasmic side.

In terms of assembly, disulfide-linked heterodimer with TRAV38-2DV8*01J31*01C*01 alpha chain. The alpha-beta TR associates with the transmembrane signaling CD3 coreceptor proteins to form the TR-CD3 (TCR). The assembly of alpha-beta TR heterodimers with CD3 occurs in the endoplasmic reticulum where a single alpha-beta TR heterodimer associates with one CD3D-CD3E heterodimer, one CD3G-CD3E heterodimer and one CD247 homodimer forming a stable octameric structure. CD3D-CD3E and CD3G-CD3E heterodimers preferentially associate with TR alpha and TR beta chains (via TM domain), respectively. The association of the CD247 homodimer is the last step of TCR assembly in the endoplasmic reticulum and is required for transport to the cell surface. In terms of tissue distribution, expressed in MR1-restricted CD8-positive T cells.

The protein resides in the cell membrane. The beta chain of TRAV38-2DV8*01J31*01C*01/TRBV25-1*01J2S3*01C2*01 alpha-beta T cell receptor (TR) clonotype that displays pan-cancer cell recognition via the invariant MR1 molecule. On CD8-positive T cell clone MC.7.G5, likely recognizes tumor-specific or -associated metabolite(s) essential for cancer cell survival, triggering killing of many cancer cell types including lung, melanoma, leukemia, colon, breast, prostate, bone and ovarian cancer cells. Mediates cancer cell cytotoxicity in an HLA-independent manner. Has no reactivity to healthy cells even stressed or infected by bacteria. Antigen recognition initiates TR-CD3 clustering on the cell surface and intracellular activation of LCK that phosphorylates the ITAM motifs of CD3G, CD3D, CD3E and CD247 enabling the recruitment of ZAP70. In turn, ZAP70 phosphorylates LAT, which recruits numerous signaling molecules to form the LAT signalosome. The LAT signalosome propagates signal branching to three major signaling pathways, the calcium, the mitogen-activated protein kinase (MAPK) kinase and the nuclear factor NF-kappa-B (NF-kB) pathways, leading to the mobilization of transcription factors that are critical for gene expression and essential for T cell differentiation into effector/memory T cells. The polypeptide is T cell receptor beta chain MC.7.G5 (Homo sapiens (Human)).